The following is a 172-amino-acid chain: Ribosome maturation factor RimM (172 aa).

A PRC barrel domain is found at 97–170; the sequence is DDEYYYDEII…LITIDVLEGL (74 aa).

This sequence belongs to the RimM family. Binds ribosomal protein uS19.

It is found in the cytoplasm. In terms of biological role, an accessory protein needed during the final step in the assembly of 30S ribosomal subunit, possibly for assembly of the head region. Essential for efficient processing of 16S rRNA. May be needed both before and after RbfA during the maturation of 16S rRNA. It has affinity for free ribosomal 30S subunits but not for 70S ribosomes. This Leuconostoc citreum (strain KM20) protein is Ribosome maturation factor RimM.